The sequence spans 100 residues: NADH-quinone oxidoreductase subunit K (100 aa).

The next 3 helical transmembrane spans lie at 4 to 24 (LQHG…GLVI), 28 to 48 (LLFM…AFVV), and 60 to 80 (VMYI…LALL).

This sequence belongs to the complex I subunit 4L family. As to quaternary structure, NDH-1 is composed of 13 different subunits. Subunits NuoA, H, J, K, L, M, N constitute the membrane sector of the complex.

The protein localises to the cell inner membrane. It carries out the reaction a quinone + NADH + 5 H(+)(in) = a quinol + NAD(+) + 4 H(+)(out). NDH-1 shuttles electrons from NADH, via FMN and iron-sulfur (Fe-S) centers, to quinones in the respiratory chain. The immediate electron acceptor for the enzyme in this species is believed to be ubiquinone. Couples the redox reaction to proton translocation (for every two electrons transferred, four hydrogen ions are translocated across the cytoplasmic membrane), and thus conserves the redox energy in a proton gradient. This Citrobacter koseri (strain ATCC BAA-895 / CDC 4225-83 / SGSC4696) protein is NADH-quinone oxidoreductase subunit K.